Here is a 342-residue protein sequence, read N- to C-terminus: (+)-pulegone reductase (342 aa).

NADP(+)-binding positions include 163–166 (GSVG), lysine 189, tyrosine 205, asparagine 229, 251–257 (CGMVSQY), 281–283 (FVV), and asparagine 331.

It belongs to the NADP-dependent oxidoreductase L4BD family.

The protein localises to the cytoplasm. It catalyses the reaction (2R,5R)-isomenthone + NADP(+) = (R)-pulegone + NADPH + H(+). The catalysed reaction is (1R,4S)-menthone + NADP(+) = (R)-pulegone + NADPH + H(+). The protein operates within secondary metabolite biosynthesis; terpenoid biosynthesis. With respect to regulation, not inhibited by (+)-menthofuran. Monoterpene synthase that catalyzes the specific reduction of the 4,8-double bond of (+)-pulegone to produce both (-)-menthone and (+)-isomenthone in a 70:30 ratio. Unable to utilize either (-)-isopiperitenone or (+)-cis-isopulegone, or to catalyze the reverse reaction with (-)-menthone or (+)-isomenthone. Has an absolute requirement for NADPH. This is (+)-pulegone reductase from Mentha piperita (Peppermint).